Reading from the N-terminus, the 159-residue chain is Cyclic pyranopterin monophosphate synthase (159 aa).

Substrate-binding positions include 75-77 and 113-114; these read LCH and ME. Aspartate 128 is an active-site residue.

This sequence belongs to the MoaC family. Homohexamer; trimer of dimers.

It catalyses the reaction (8S)-3',8-cyclo-7,8-dihydroguanosine 5'-triphosphate = cyclic pyranopterin phosphate + diphosphate. It participates in cofactor biosynthesis; molybdopterin biosynthesis. In terms of biological role, catalyzes the conversion of (8S)-3',8-cyclo-7,8-dihydroguanosine 5'-triphosphate to cyclic pyranopterin monophosphate (cPMP). In Serratia proteamaculans (strain 568), this protein is Cyclic pyranopterin monophosphate synthase.